The following is a 280-amino-acid chain: F-actin-capping protein subunit alpha (280 aa).

This sequence belongs to the F-actin-capping protein alpha subunit family. Heterodimer of an alpha and a beta subunit.

It is found in the cytoplasm. The protein localises to the cytoskeleton. F-actin-capping proteins bind in a Ca(2+)-independent manner to the fast growing ends of actin filaments (barbed end) thereby blocking the exchange of subunits at these ends. Unlike other capping proteins (such as gelsolin and severin), these proteins do not sever actin filaments. This is F-actin-capping protein subunit alpha (CAP01) from Candida albicans (strain SC5314 / ATCC MYA-2876) (Yeast).